A 452-amino-acid chain; its full sequence is Tubulin beta-2 chain (452 aa).

Residues Gln11, Glu72, Ser141, Gly145, Thr146, Gly147, Asn207, and Asn229 each coordinate GTP. Position 72 (Glu72) interacts with Mg(2+). Positions 414 to 452 (AESNMNDPVAEYQQYQDATADDEEEYDDEAADDHHQYES) are disordered. The segment covering 432–444 (TADDEEEYDDEAA) has biased composition (acidic residues).

Belongs to the tubulin family. Dimer of alpha and beta chains. A typical microtubule is a hollow water-filled tube with an outer diameter of 25 nm and an inner diameter of 15 nM. Alpha-beta heterodimers associate head-to-tail to form protofilaments running lengthwise along the microtubule wall with the beta-tubulin subunit facing the microtubule plus end conferring a structural polarity. Microtubules usually have 13 protofilaments but different protofilament numbers can be found in some organisms and specialized cells. It depends on Mg(2+) as a cofactor.

It localises to the cytoplasm. Its subcellular location is the cytoskeleton. In terms of biological role, tubulin is the major constituent of microtubules, a cylinder consisting of laterally associated linear protofilaments composed of alpha- and beta-tubulin heterodimers. Microtubules grow by the addition of GTP-tubulin dimers to the microtubule end, where a stabilizing cap forms. Below the cap, tubulin dimers are in GDP-bound state, owing to GTPase activity of alpha-tubulin. This chain is Tubulin beta-2 chain (TUBB2), found in Solanum tuberosum (Potato).